The primary structure comprises 358 residues: D-xylulose reductase A (358 aa).

Residues Cys-47, His-72, and Glu-73 each coordinate Zn(2+). Residue 182–187 (GAGPVG) coordinates NAD(+).

Belongs to the zinc-containing alcohol dehydrogenase family. It depends on Zn(2+) as a cofactor.

The catalysed reaction is xylitol + NAD(+) = D-xylulose + NADH + H(+). It participates in carbohydrate degradation; L-arabinose degradation via L-arabinitol; D-xylulose 5-phosphate from L-arabinose (fungal route): step 4/5. Functionally, xylitol dehydrogenase which catalyzes the conversion of xylitol to D-xylulose. Xylose is a major component of hemicelluloses such as xylan. Most fungi utilize D-xylose via three enzymatic reactions, xylose reductase (XR), xylitol dehydrogenase (XDH), and xylulokinase, to form xylulose 5-phosphate, which enters pentose phosphate pathway. In Aspergillus oryzae (strain ATCC 42149 / RIB 40) (Yellow koji mold), this protein is D-xylulose reductase A (xdhA).